The chain runs to 117 residues: MASFPLLLTLLTHCAGSWAQSVLTQPPSASGTPGQRVTISCSGSSSNIGSNTVNWYQQLPGTAPKLLIYSNNQRPSGVPDRFSGSKSGTSASLAISGLQSEDEADYYCAAWDDSLNG.

Positions Met-1–Ala-19 are cleaved as a signal peptide. Pyrrolidone carboxylic acid is present on Gln-20. Residues Gln-20 to Ser-44 are framework-1. The Ig-like domain occupies Gln-20–Gly-117. Positions Thr-24 to Gln-35 are enriched in polar residues. The disordered stretch occupies residues Thr-24–Ser-45. A disulfide bridge links Cys-41 with Cys-108. The segment at Ser-45 to Thr-52 is complementarity-determining-1. Residues Val-53–Tyr-69 are framework-2. The segment at Ser-70 to Asn-72 is complementarity-determining-2. Positions Gln-73 to Cys-108 are framework-3. The segment at Ala-109–Gly-117 is complementarity-determining-3.

In terms of assembly, immunoglobulins are composed of two identical heavy chains and two identical light chains; disulfide-linked.

The protein localises to the secreted. It is found in the cell membrane. Functionally, v region of the variable domain of immunoglobulin light chains that participates in the antigen recognition. Immunoglobulins, also known as antibodies, are membrane-bound or secreted glycoproteins produced by B lymphocytes. In the recognition phase of humoral immunity, the membrane-bound immunoglobulins serve as receptors which, upon binding of a specific antigen, trigger the clonal expansion and differentiation of B lymphocytes into immunoglobulins-secreting plasma cells. Secreted immunoglobulins mediate the effector phase of humoral immunity, which results in the elimination of bound antigens. The antigen binding site is formed by the variable domain of one heavy chain, together with that of its associated light chain. Thus, each immunoglobulin has two antigen binding sites with remarkable affinity for a particular antigen. The variable domains are assembled by a process called V-(D)-J rearrangement and can then be subjected to somatic hypermutations which, after exposure to antigen and selection, allow affinity maturation for a particular antigen. The protein is Immunoglobulin lambda variable 1-44 of Homo sapiens (Human).